A 481-amino-acid chain; its full sequence is Ammonium transporter 2 member 3 (481 aa).

Over 1–36 (MNFNSSKYISHLPESLLPNDASPEWNNKADNAWQLT) the chain is Extracellular. Asn4 carries N-linked (GlcNAc...) asparagine glycosylation. Residues 37-57 (AATLVGLQTVPGLVILYGSMV) form a helical membrane-spanning segment. Residues 58-62 (KKKWA) are Cytoplasmic-facing. The helical transmembrane segment at 63–83 (VNSAFMALYAFAAVLVCWVLW) threads the bilayer. At 84–123 (AHHMAFGTKLLPFVGKPNFALSQKFLLSKASTNYYLPMAD) the chain is on the extracellular side. Residues 124–144 (FVFYQFAFAAITLVLLGGSLL) form a helical membrane-spanning segment. Topologically, residues 145–151 (GRMNFYA) are cytoplasmic. Residues 152–172 (WMLFVPLWLTLSYTVGAFTIW) form a helical membrane-spanning segment. Residues 173–184 (GNGFLEGKIIDY) are Extracellular-facing. A helical transmembrane segment spans residues 185 to 205 (AGGFVIHLSSGVAGFTAAYWV). Residues 206-220 (GPRTSNDRQNFPPNN) lie on the Cytoplasmic side of the membrane. Residues 221–241 (IIHMLGGAGFLWMGWTGFNGG) traverse the membrane as a helical segment. At 242-248 (APFQVGE) the chain is on the extracellular side. A helical transmembrane segment spans residues 249 to 269 (ITSLAIFNTHLCTATSILVWI). Topologically, residues 270–281 (SLDMAVYKKGSL) are cytoplasmic. A helical transmembrane segment spans residues 282–302 (IGSVQGMMTGLVCITPGAGLV). Residues 303-304 (DP) lie on the Extracellular side of the membrane. A helical membrane pass occupies residues 305–325 (WAAILMGALSGSIPWYTMMVL). Residues 326–338 (HKKSPFFQSVDDT) are Cytoplasmic-facing. Residues 339–359 (LGVFHTHAVAGILGGILSGVF) traverse the membrane as a helical segment. At 360-363 (AKPK) the chain is on the extracellular side. A helical transmembrane segment spans residues 364-381 (LLRILYGPYGSGLLYSYF). Residues 382–395 (DDNIGQGIKQMWYQ) are Cytoplasmic-facing. The chain crosses the membrane as a helical span at residues 396-416 (LLGAVFITIWNVVITSLICIL). The Extracellular segment spans residues 417–481 (LNRFVNLRMQ…HSFPINKIDE (65 aa)).

The protein belongs to the ammonia transporter channel (TC 1.A.11.2) family. As to expression, mostly expressed in mycorrhizal roots. Also observed in the cortex and endodermis of non-mycorrhizal roots.

Its subcellular location is the cell membrane. Its function is as follows. Involved in ammonium transport. Required for arbuscular mycorrhizal (AM) symbiosis with AM fungi (e.g. Glomus versiforme and G.intraradices) in low nitrogen conditions. The protein is Ammonium transporter 2 member 3 of Medicago truncatula (Barrel medic).